The chain runs to 144 residues: Large ribosomal subunit protein uL14 (144 aa).

The protein belongs to the universal ribosomal protein uL14 family. As to quaternary structure, part of the 50S ribosomal subunit. Forms a cluster with proteins L3 and L24e, part of which may contact the 16S rRNA in 2 intersubunit bridges.

Binds to 23S rRNA. Forms part of two intersubunit bridges in the 70S ribosome. This is Large ribosomal subunit protein uL14 from Pyrobaculum arsenaticum (strain DSM 13514 / JCM 11321 / PZ6).